The primary structure comprises 202 residues: Response regulator RamR (202 aa).

The response regulatory stretch occupies residues M1 to R121. The 66-residue stretch at L135–G200 folds into the HTH luxR-type domain. Residues I159–A178 constitute a DNA-binding region (H-T-H motif).

In terms of assembly, homodimer, in the absence of phosphorylation. May be phosphorylated by an unknown kinase, probably on Asp-56.

Its function is as follows. A transcription factor required for aerial hyphae formation on rich medium. Activates transcription of ramC. Might be part of a two-component regulatory system. Binds the promoter of ramC. Non-phosphorylated protein cooperatively binds multiple sites in the ramC promoter. Has not been seen to autophosphorylate using the small molecule phosphodonors phosphoramidate, acetyl phosphate or carbamoyl phosphate. Upon low expression suppresses the bald (bld, no aerial hyphae) phenotype of citA but not bldJ mutants; higher expression also suppresses the bldJ mutant as well as several other bld mutations, inducing SapB production even on media where SapB is normally not produced. Expression of the ram locus (ramA, ramB and ramR) induces rapid aerial mycelium formation in S.lividans. Overexpression suppresses the no aerial hyphae phenotype of a chaplin-negative strain, probably by inducing expression of SapB. Overexpression of RamR show there are about 280 genes having at least a threefold increase or fourfold decrease in RNA abundance versus wild-type including gene cluster SCO4072-SCO4075. In Streptomyces coelicolor (strain ATCC BAA-471 / A3(2) / M145), this protein is Response regulator RamR.